A 252-amino-acid chain; its full sequence is MQIFHNLNEWIHFRNTLSPDLSLGFAPTMGNLHAGHASLFLASSKENHYTVSSLFVNPTQFNNPDDYKHYPRTVDADLELMTQNGVDFCILPNENEIYTDGYAYQVQENRLGQLMEGKHRPGHFNGVLTIVMKLFNLVKPTRAYFGEKDYQQLLLIQGMVKALFMDIEIKSCPTVREKSGLACSSRNNRLTPSQREIADEFAKIFHQNKSSAMISKELEALGITVEYIEEFQGRRFAAVKIGDIRLIDNYLL.

Residue 29–36 participates in ATP binding; sequence MGNLHAGH. The active-site Proton donor is the His36. Gln60 contacts (R)-pantoate. A beta-alanine-binding site is contributed by Gln60. ATP is bound at residue 146–149; the sequence is GEKD. Gln152 is a (R)-pantoate binding site. ATP contacts are provided by residues Val175 and 183–186; that span reads CSSR.

Belongs to the pantothenate synthetase family. Homodimer.

The protein resides in the cytoplasm. The catalysed reaction is (R)-pantoate + beta-alanine + ATP = (R)-pantothenate + AMP + diphosphate + H(+). It participates in cofactor biosynthesis; (R)-pantothenate biosynthesis; (R)-pantothenate from (R)-pantoate and beta-alanine: step 1/1. Its function is as follows. Catalyzes the condensation of pantoate with beta-alanine in an ATP-dependent reaction via a pantoyl-adenylate intermediate. The polypeptide is Pantothenate synthetase (Legionella pneumophila subsp. pneumophila (strain Philadelphia 1 / ATCC 33152 / DSM 7513)).